Here is a 33-residue protein sequence, read N- to C-terminus: Large ribosomal subunit protein eL28 (33 aa).

This sequence belongs to the eukaryotic ribosomal protein eL28 family. In terms of assembly, component of the large ribosomal subunit.

It localises to the cytoplasm. Its function is as follows. Component of the large ribosomal subunit. The ribosome is a large ribonucleoprotein complex responsible for the synthesis of proteins in the cell. The polypeptide is Large ribosomal subunit protein eL28 (rpl28) (Xenopus laevis (African clawed frog)).